Here is an 89-residue protein sequence, read N- to C-terminus: MLCAIYKSKKKDGMYLYIEKRDDFSVLPDSLREAFGIPVFVMLFNLVGKKTLINTDNREVMEQIKQNGFYLQMPKKDDWLFTIEKSCDL.

Positions 1–85 (MLCAIYKSKK…KDDWLFTIEK (85 aa)) constitute a YcgL domain.

This chain is YcgL domain-containing protein Asuc_1390, found in Actinobacillus succinogenes (strain ATCC 55618 / DSM 22257 / CCUG 43843 / 130Z).